The primary structure comprises 101 residues: MGNPVVIKAKKDYDCVFEPEPMSWLRLQYYRYQVTAGTYLFTYKEAFVFNTVVFIIVFLTGWAAKSIIVKLLPSLWRLSTLIPSFFASFFMSLLGKDASSQ.

2 consecutive transmembrane segments (helical) span residues 52–72 (VVFI…VKLL) and 75–95 (LWRL…SLLG).

The protein resides in the endoplasmic reticulum membrane. This is an uncharacterized protein from Schizosaccharomyces pombe (strain 972 / ATCC 24843) (Fission yeast).